The chain runs to 305 residues: RxLR effector protein 17 (305 aa).

Positions M1–G24 are cleaved as a signal peptide. The RxLR-dEER signature appears at R45–R60. 2 N-linked (GlcNAc...) asparagine glycosylation sites follow: N207 and N227. The segment at L247 to L269 is w motif.

It belongs to the RxLR effector family. Interacts with host A.thaliana At1G14340.

The protein localises to the secreted. The protein resides in the host cell membrane. Secreted effector that confers enhanced plant susceptibility during both compatible and incompatible interactions between the pathogen and its host. Promotes the sexual reproduction of the pathogen in the plant host. The sequence is that of RxLR effector protein 17 from Hyaloperonospora arabidopsidis (strain Emoy2) (Downy mildew agent).